The following is a 258-amino-acid chain: Phosphate import ATP-binding protein PstB (258 aa).

Residues 12–253 form the ABC transporter domain; the sequence is LEVKNLNFYY…PARKETEDYI (242 aa). Position 44–51 (44–51) interacts with ATP; the sequence is GPSGCGKS.

Belongs to the ABC transporter superfamily. Phosphate importer (TC 3.A.1.7) family. The complex is composed of two ATP-binding proteins (PstB), two transmembrane proteins (PstC and PstA) and a solute-binding protein (PstS).

Its subcellular location is the cell inner membrane. The enzyme catalyses phosphate(out) + ATP + H2O = ADP + 2 phosphate(in) + H(+). Functionally, part of the ABC transporter complex PstSACB involved in phosphate import. Responsible for energy coupling to the transport system. This chain is Phosphate import ATP-binding protein PstB, found in Bordetella parapertussis (strain 12822 / ATCC BAA-587 / NCTC 13253).